The sequence spans 568 residues: 2-succinyl-5-enolpyruvyl-6-hydroxy-3-cyclohexene-1-carboxylate synthase (568 aa).

The protein belongs to the TPP enzyme family. MenD subfamily. Homodimer. Mg(2+) is required as a cofactor. Mn(2+) serves as cofactor. It depends on thiamine diphosphate as a cofactor.

The enzyme catalyses isochorismate + 2-oxoglutarate + H(+) = 5-enolpyruvoyl-6-hydroxy-2-succinyl-cyclohex-3-ene-1-carboxylate + CO2. It functions in the pathway quinol/quinone metabolism; 1,4-dihydroxy-2-naphthoate biosynthesis; 1,4-dihydroxy-2-naphthoate from chorismate: step 2/7. Its pathway is quinol/quinone metabolism; menaquinone biosynthesis. Functionally, catalyzes the thiamine diphosphate-dependent decarboxylation of 2-oxoglutarate and the subsequent addition of the resulting succinic semialdehyde-thiamine pyrophosphate anion to isochorismate to yield 2-succinyl-5-enolpyruvyl-6-hydroxy-3-cyclohexene-1-carboxylate (SEPHCHC). The protein is 2-succinyl-5-enolpyruvyl-6-hydroxy-3-cyclohexene-1-carboxylate synthase of Haemophilus influenzae (strain PittGG).